Reading from the N-terminus, the 357-residue chain is 3-dehydroquinate synthase (357 aa).

NAD(+) contacts are provided by residues 69–74 (DGEQFK), 103–107 (GVVGD), 127–128 (TT), lysine 140, lysine 149, and 167–170 (CLQT). Positions 182, 245, and 262 each coordinate Zn(2+).

The protein belongs to the sugar phosphate cyclases superfamily. Dehydroquinate synthase family. Co(2+) serves as cofactor. It depends on Zn(2+) as a cofactor. The cofactor is NAD(+).

Its subcellular location is the cytoplasm. It catalyses the reaction 7-phospho-2-dehydro-3-deoxy-D-arabino-heptonate = 3-dehydroquinate + phosphate. It functions in the pathway metabolic intermediate biosynthesis; chorismate biosynthesis; chorismate from D-erythrose 4-phosphate and phosphoenolpyruvate: step 2/7. Catalyzes the conversion of 3-deoxy-D-arabino-heptulosonate 7-phosphate (DAHP) to dehydroquinate (DHQ). In Idiomarina loihiensis (strain ATCC BAA-735 / DSM 15497 / L2-TR), this protein is 3-dehydroquinate synthase.